Here is a 389-residue protein sequence, read N- to C-terminus: Probable peptide chain release factor 1, mitochondrial (389 aa).

Q259 carries the post-translational modification N5-methylglutamine.

The protein belongs to the prokaryotic/mitochondrial release factor family. Methylation of glutamine in the GGQ triplet is conserved from bacteria to mammals.

It is found in the mitochondrion. In terms of biological role, mitochondrial peptide chain release factor that directs the termination of translation in response to the peptide chain termination codons UAA and UAG. In Caenorhabditis elegans, this protein is Probable peptide chain release factor 1, mitochondrial.